A 250-amino-acid chain; its full sequence is 23S rRNA (guanosine-2'-O-)-methyltransferase RlmB (250 aa).

3 residues coordinate S-adenosyl-L-methionine: Gly198, Leu218, and Leu227.

Belongs to the class IV-like SAM-binding methyltransferase superfamily. RNA methyltransferase TrmH family. RlmB subfamily.

The protein resides in the cytoplasm. The catalysed reaction is guanosine(2251) in 23S rRNA + S-adenosyl-L-methionine = 2'-O-methylguanosine(2251) in 23S rRNA + S-adenosyl-L-homocysteine + H(+). Functionally, specifically methylates the ribose of guanosine 2251 in 23S rRNA. The polypeptide is 23S rRNA (guanosine-2'-O-)-methyltransferase RlmB (Pseudomonas syringae pv. tomato (strain ATCC BAA-871 / DC3000)).